A 113-amino-acid polypeptide reads, in one-letter code: Neocarzinostatin (113 aa).

2 disulfide bridges follow: cysteine 37-cysteine 47 and cysteine 88-cysteine 93.

The protein belongs to the neocarzinostatin family.

NCS has antibiotic activity (for Gram-positive bacteria) and antitumor activity (for certain mouse tumors). NCS binds non-covalently to a chromophore which is the cytotoxic and mutagenic component of the antibiotic. The chromophore binds to DNA as a weak intercalator and causes single- and double-strand breaks. The sequence is that of Neocarzinostatin (ncsA) from Streptomyces malayensis.